Consider the following 503-residue polypeptide: MSAALRFDNIGKVFPGVRALDGISFDVHAGEVHGLMGENGAGKSTLLKILGGEYQPDAGSVLVDGRPVQFANAAASIAAGIAVIHQELQYVPDLTVAENLLLGRLPNAFGWVKKREAKRYVRERLAEMGVDLDPDARLGRLSIAQRQMVEICKALMRNARVIALDEPTSSLSHRETEVLFKLVDDLRAQGRALIYISHRMDEIYRLCDACTIFRDGRKIASHDALADVPRERLVAEMVGREIADIYHYAPRTLGDVRFSAEGVDGPALREPASFSVRAGEIVGFFGLVGAGRSELMRLVYGADRRRAGALTLDGKRIDVKRTGDAIRHGIVLCPEDRKEEGIIAIASVAENINISCRRHSLRAGLFINGKTESETADRFIQRLKIKTPNRRQKIRFLSGGNQQKAILSRWLAEPDLKVVILDEPTRGIDVGAKHEIYDVIYRLAERGCAIVMVSSELPEVLGVSDRIVVMREGRIAGELPRADANEHAVLNLALPQTSAVEAA.

2 ABC transporter domains span residues 5 to 240 (LRFD…MVGR) and 251 to 497 (RTLG…LPQT). 37-44 (GENGAGKS) is a binding site for ATP.

The protein belongs to the ABC transporter superfamily. Arabinose importer (TC 3.A.1.2.2) family. The complex is composed of two ATP-binding proteins (AraG), two transmembrane proteins (AraH) and a solute-binding protein (AraF).

The protein localises to the cell inner membrane. It catalyses the reaction L-arabinose(out) + ATP + H2O = L-arabinose(in) + ADP + phosphate + H(+). Its function is as follows. Part of the ABC transporter complex AraFGH involved in arabinose import. Responsible for energy coupling to the transport system. The chain is Arabinose import ATP-binding protein AraG 1 from Burkholderia cenocepacia (strain HI2424).